Consider the following 521-residue polypeptide: Probable protein phosphatase 2C 16 (521 aa).

The PPM-type phosphatase domain occupies lysine 21–phenylalanine 327. 4 residues coordinate Mn(2+): aspartate 57, glycine 58, glutamine 276, and glutamate 318. Residues alanine 354 to proline 431 form a disordered region.

The protein belongs to the PP2C family. Mg(2+) is required as a cofactor. The cofactor is Mn(2+).

It carries out the reaction O-phospho-L-seryl-[protein] + H2O = L-seryl-[protein] + phosphate. The enzyme catalyses O-phospho-L-threonyl-[protein] + H2O = L-threonyl-[protein] + phosphate. The polypeptide is Probable protein phosphatase 2C 16 (Oryza sativa subsp. japonica (Rice)).